A 1070-amino-acid chain; its full sequence is Inactive tyrosine-protein kinase 7 (1070 aa).

Positions 1-30 (MGAARGSPARPRRLPLLSVLLLPLLGGTQT) are cleaved as a signal peptide. 7 Ig-like C2-type domains span residues 31 to 120 (AIVF…ASFN), 128 to 218 (PVVL…FTLS), 225 to 317 (ARVV…EATL), 309 to 407 (PPII…VNIT), 412 to 497 (PSWL…ARVQ), 503 to 586 (KFTP…HVQL), and 578 to 680 (GQIR…APLY). At 31–704 (AIVFIKQPSS…SPPPYKMIQT (674 aa)) the chain is on the extracellular side. Cys-53 and Cys-101 form a disulfide bridge. Asn-116, Asn-175, Asn-184, Asn-214, Asn-268, and Asn-283 each carry an N-linked (GlcNAc...) asparagine glycan. A disulfide bridge connects residues Cys-150 and Cys-200. 2 cysteine pairs are disulfide-bonded: Cys-246–Cys-301 and Cys-343–Cys-391. 4 N-linked (GlcNAc...) asparagine glycosylation sites follow: Asn-405, Asn-463, Asn-567, and Asn-646. 3 cysteine pairs are disulfide-bonded: Cys-433–Cys-481, Cys-524–Cys-570, and Cys-613–Cys-664. A helical transmembrane segment spans residues 705 to 725 (IGLSVGAAVAYIIAVLGLMFY). Over 726-1070 (CKKRCKAKRL…LGDSTVDSKP (345 aa)) the chain is Cytoplasmic. Disordered stretches follow at residues 736-759 (QKQPEGEEPEMECLNGGPLQNGQP) and 773-793 (GSGPAATNKRHSTSDKMHFPR). The interval 794 to 1070 (SSLQPITTLG…LGDSTVDSKP (277 aa)) is interaction with CTNNB1. Residues 796–1066 (LQPITTLGKS…IASALGDSTV (271 aa)) form the Protein kinase; inactive domain. The residue at position 1064 (Ser-1064) is a Phosphoserine.

It belongs to the protein kinase superfamily. Tyr protein kinase family. Insulin receptor subfamily. In terms of assembly, interacts with CTNNB1. In terms of processing, MMP14 cleaves PTK7 between Pro-621 and Leu-622 generating an N-terminal soluble (70 kDa) fragment and a membrane C-terminal (50 kDa) fragment. Proteolysis by MMP14 regulates PTK7 function in non-canonical Wnt signaling pathway. In terms of tissue distribution, highly expressed in lung, liver, pancreas, kidney, placenta and melanocytes. Weakly expressed in thyroid gland, ovary, brain, heart and skeletal muscle. Also expressed in erythroleukemia cells. But not expressed in colon.

Its subcellular location is the membrane. It localises to the cell junction. In terms of biological role, inactive tyrosine kinase involved in Wnt signaling pathway. Component of both the non-canonical (also known as the Wnt/planar cell polarity signaling) and the canonical Wnt signaling pathway. Functions in cell adhesion, cell migration, cell polarity, proliferation, actin cytoskeleton reorganization and apoptosis. Has a role in embryogenesis, epithelial tissue organization and angiogenesis. This is Inactive tyrosine-protein kinase 7 (PTK7) from Homo sapiens (Human).